A 352-amino-acid polypeptide reads, in one-letter code: N-acetyl-gamma-glutamyl-phosphate reductase (352 aa).

Cys-155 is an active-site residue.

Belongs to the NAGSA dehydrogenase family. Type 1 subfamily.

It localises to the cytoplasm. The enzyme catalyses N-acetyl-L-glutamate 5-semialdehyde + phosphate + NADP(+) = N-acetyl-L-glutamyl 5-phosphate + NADPH + H(+). Its pathway is amino-acid biosynthesis; L-arginine biosynthesis; N(2)-acetyl-L-ornithine from L-glutamate: step 3/4. Its function is as follows. Catalyzes the NADPH-dependent reduction of N-acetyl-5-glutamyl phosphate to yield N-acetyl-L-glutamate 5-semialdehyde. In Rippkaea orientalis (strain PCC 8801 / RF-1) (Cyanothece sp. (strain PCC 8801)), this protein is N-acetyl-gamma-glutamyl-phosphate reductase.